A 478-amino-acid polypeptide reads, in one-letter code: UDP-N-acetylmuramate--L-alanine ligase (478 aa).

Residue 125–131 (GTHGKTT) coordinates ATP.

It belongs to the MurCDEF family.

It localises to the cytoplasm. It carries out the reaction UDP-N-acetyl-alpha-D-muramate + L-alanine + ATP = UDP-N-acetyl-alpha-D-muramoyl-L-alanine + ADP + phosphate + H(+). It functions in the pathway cell wall biogenesis; peptidoglycan biosynthesis. Its function is as follows. Cell wall formation. The sequence is that of UDP-N-acetylmuramate--L-alanine ligase from Dichelobacter nodosus (strain VCS1703A).